A 129-amino-acid chain; its full sequence is Small ribosomal subunit protein uS9 (129 aa).

Belongs to the universal ribosomal protein uS9 family.

This is Small ribosomal subunit protein uS9 from Pelodictyon phaeoclathratiforme (strain DSM 5477 / BU-1).